The primary structure comprises 427 residues: tRNA(Ile)-lysidine synthase (427 aa).

25 to 30 (SGGLDS) provides a ligand contact to ATP.

The protein belongs to the tRNA(Ile)-lysidine synthase family.

It localises to the cytoplasm. It carries out the reaction cytidine(34) in tRNA(Ile2) + L-lysine + ATP = lysidine(34) in tRNA(Ile2) + AMP + diphosphate + H(+). In terms of biological role, ligates lysine onto the cytidine present at position 34 of the AUA codon-specific tRNA(Ile) that contains the anticodon CAU, in an ATP-dependent manner. Cytidine is converted to lysidine, thus changing the amino acid specificity of the tRNA from methionine to isoleucine. The protein is tRNA(Ile)-lysidine synthase of Histophilus somni (strain 129Pt) (Haemophilus somnus).